We begin with the raw amino-acid sequence, 666 residues long: Secreted protein ARB_01864 (666 aa).

A signal peptide spans 1–18 (MRFSTLVSLAAWAAAALA). Residues N160, N216, N342, N405, N594, N600, and N662 are each glycosylated (N-linked (GlcNAc...) asparagine). Residues 323–353 (RGSMKPRGVPNPTRRAIKGNATTSTQPYQHP) form a disordered region.

The protein resides in the secreted. The chain is Secreted protein ARB_01864 from Arthroderma benhamiae (strain ATCC MYA-4681 / CBS 112371) (Trichophyton mentagrophytes).